Consider the following 69-residue polypeptide: Large ribosomal subunit protein uL29 (69 aa).

The protein belongs to the universal ribosomal protein uL29 family.

This is Large ribosomal subunit protein uL29 from Natronomonas pharaonis (strain ATCC 35678 / DSM 2160 / CIP 103997 / JCM 8858 / NBRC 14720 / NCIMB 2260 / Gabara) (Halobacterium pharaonis).